The sequence spans 285 residues: Inositol oxygenase (285 aa).

R29 contributes to the substrate binding site. S33 carries the post-translational modification Phosphoserine. 85–87 lines the substrate pocket; that stretch reads DES. H98, H123, and D124 together coordinate Fe cation. Residues K127 and 141-142 contribute to the substrate site; that span reads GD. 3 residues coordinate Fe cation: H194, H220, and D253. 220–221 provides a ligand contact to substrate; that stretch reads HS.

Belongs to the myo-inositol oxygenase family. It depends on Fe cation as a cofactor. Kidney specific.

It is found in the cytoplasm. The catalysed reaction is myo-inositol + O2 = D-glucuronate + H2O + H(+). Its pathway is polyol metabolism; myo-inositol degradation into D-glucuronate; D-glucuronate from myo-inositol: step 1/1. This chain is Inositol oxygenase (MIOX), found in Homo sapiens (Human).